A 1923-amino-acid chain; its full sequence is GREB1-like protein (1923 aa).

Acidic residues predominate over residues 87–96 (EDDEDDEEMS). Disordered regions lie at residues 87 to 111 (EDDEDDEEMSDSNSPPIPYSQKPAP), 246 to 326 (SCHS…GPPK), and 1101 to 1222 (RAAV…RGCR). A compositionally biased stretch (low complexity) spans 252–262 (PSSSVSSTVTP). 3 stretches are compositionally biased toward polar residues: residues 263-278 (ENGTTNGYKSGFTQTD), 296-307 (TPAHTGNYSLSP), and 1119-1161 (PQSN…SPAT). Over residues 1195-1206 (SSTTSKPSSSSS) the composition is skewed to low complexity. Residues 1843–1862 (GVFFSGLLLYLCDSFVGADL) traverse the membrane as a helical segment.

This sequence belongs to the GREB1 family. As to expression, widely expressed, with prominent expression in the cochlea. Expressed at high levels in fetal kidney. In adult tissues, highest levels in vagina, cervix and epididymis.

Its subcellular location is the membrane. Plays a major role in early metanephros and genital development. The polypeptide is GREB1-like protein (GREB1L) (Homo sapiens (Human)).